A 274-amino-acid polypeptide reads, in one-letter code: Acyl-coenzyme A diphosphatase YFT2 (274 aa).

Residues 1–11 are Cytoplasmic-facing; the sequence is MIRQLNYWSRK. The chain crosses the membrane as a helical span at residues 12-32; the sequence is AYLIYPFQVFVGALLSIVVSS. At 33 to 60 the chain is on the lumenal side; the sequence is ETLNHQKETCALLKSSNIFNVIFAYKAN. The helical transmembrane segment at 61 to 81 threads the bilayer; that stretch reads QLWPFLFFSLAFLQIYFHYLA. Over 82-124 the chain is Cytoplasmic; that stretch reads RMDILPLPISSTETSSSYLTYTNHWPLLKNRIISIMITQYACK. The helical transmembrane segment at 125–145 threads the bilayer; the sequence is FVLKYLLLFLNFQFIDHVFIW. Topologically, residues 146–170 are lumenal; the sequence is TGGECSSGSKTTSAEKCRLENGKWD. Residues 171–191 form a helical membrane-spanning segment; that stretch reads GGFDISGHFCFLVSISMILWM. Histidine 178 is an active-site residue. Residues 192–215 lie on the Cytoplasmic side of the membrane; the sequence is ELHLFSRFVQAEDMFWVVNKWVRA. A helical membrane pass occupies residues 216–236; that stretch reads CLAIVCAVLVIWICILWVTAI. Residues 237–247 are Lumenal-facing; the sequence is YYHTILEKVLG. Histidine 239 is a catalytic residue. Residues 248–268 traverse the membrane as a helical segment; it reads CLMGFICPVFIYHILPKIGIL. Residues 269-274 lie on the Cytoplasmic side of the membrane; sequence HNYLYL.

This sequence belongs to the FIT family. Yeast FIT2A/YFT2 subfamily.

Its subcellular location is the endoplasmic reticulum membrane. The protein resides in the vacuole. The catalysed reaction is an acyl-CoA + H2O = an acyl-4'-phosphopantetheine + adenosine 3',5'-bisphosphate + 2 H(+). It catalyses the reaction (9Z)-octadecenoyl-CoA + H2O = S-(9Z-octadecenoyl)-4'-phosphopantetheine + adenosine 3',5'-bisphosphate + 2 H(+). It carries out the reaction (5Z,8Z,11Z,14Z)-eicosatetraenoyl-CoA + H2O = S-(5Z,8Z,11Z,14Z-eicosatetraenoyl)-4'-phosphopantetheine + adenosine 3',5'-bisphosphate + 2 H(+). The enzyme catalyses hexadecanoyl-CoA + H2O = S-hexadecanoyl-4'-phosphopantetheine + adenosine 3',5'-bisphosphate + 2 H(+). Its function is as follows. Fatty acyl-coenzyme A (CoA) diphosphatase that hydrolyzes fatty acyl-CoA to yield acyl-4'-phosphopantetheine and adenosine 3',5'-bisphosphate. Preferentially hydrolyzes unsaturated long-chain acyl-CoA substrates in the endoplasmic reticulum (ER) lumen. This catalytic activity is required for maintaining ER structure and for lipid droplets (LDs) biogenesis, which are lipid storage organelles involved in maintaining lipid and energy homeostasis. May directly bind to diacylglycerol (DAGs) and triacylglycerol, which is also important for LD biogenesis. May support directional budding of nacent LDs from the ER into the cytosol by reducing DAG levels at sites of LD formation. May play a role in the regulation of cell morphology and cytoskeletal organization. Involved in phospholipid biosynthesis. This chain is Acyl-coenzyme A diphosphatase YFT2, found in Saccharomyces cerevisiae (strain ATCC 204508 / S288c) (Baker's yeast).